The sequence spans 274 residues: Regulator of G-protein signaling rgs-11 (274 aa).

An RGS domain is found at S137–L256.

The protein is Regulator of G-protein signaling rgs-11 (rgs-11) of Caenorhabditis elegans.